A 290-amino-acid chain; its full sequence is Feruloyl esterase D (290 aa).

The signal sequence occupies residues 1 to 25 (MAGLHSRLTTFLLLLLSALPAIAAA). A disordered region spans residues 260 to 280 (HGGDHNPSQRDPGQNDPFAPR).

The protein belongs to the serine esterase family.

It is found in the secreted. The enzyme catalyses feruloyl-polysaccharide + H2O = ferulate + polysaccharide.. Involved in degradation of plant cell walls. Hydrolyzes the feruloyl-arabinose ester bond in arabinoxylans as well as the feruloyl-galactose and feruloyl-arabinose ester bonds in pectin. Active against methyl esters of ferulate (MFA), sinapate (MSA), caffeate (MCA) and p-coumarate (MpCA). The sequence is that of Feruloyl esterase D from Neurospora crassa (strain ATCC 24698 / 74-OR23-1A / CBS 708.71 / DSM 1257 / FGSC 987).